Reading from the N-terminus, the 396-residue chain is Lipid-A-disaccharide synthase (396 aa).

This sequence belongs to the LpxB family.

The enzyme catalyses a lipid X + a UDP-2-N,3-O-bis[(3R)-3-hydroxyacyl]-alpha-D-glucosamine = a lipid A disaccharide + UDP + H(+). It functions in the pathway bacterial outer membrane biogenesis; LPS lipid A biosynthesis. Functionally, condensation of UDP-2,3-diacylglucosamine and 2,3-diacylglucosamine-1-phosphate to form lipid A disaccharide, a precursor of lipid A, a phosphorylated glycolipid that anchors the lipopolysaccharide to the outer membrane of the cell. This Nitrobacter winogradskyi (strain ATCC 25391 / DSM 10237 / CIP 104748 / NCIMB 11846 / Nb-255) protein is Lipid-A-disaccharide synthase.